The chain runs to 1996 residues: Protein Shroom3 (1996 aa).

A PDZ domain is found at 25-110 (YIYLEAFLEG…TLRLVVRRDV (86 aa)). Residues 150-173 (KHRRSEPAGRPHSWHTTKSGEKQP) form a disordered region. Ser-213 carries the phosphoserine modification. Disordered regions lie at residues 340–389 (NGQG…PARS), 437–468 (EKSPENSPPVKPKHNYTQKAQPGQPLLPTSIY), 568–629 (DASL…WEGD), 673–772 (RRHS…LQGF), and 788–1053 (FEQR…PESS). A phosphoserine mark is found at Ser-439 and Ser-443. The segment covering 700–718 (KAEDPGRKAAPDLGSHLDR) has biased composition (basic and acidic residues). Positions 750–768 (HPHTSSLGRRGPGPGSASA) are enriched in low complexity. Residues 814–823 (TVSTSSTSGN) are compositionally biased toward polar residues. Ser-816 carries the post-translational modification Phosphoserine. Basic and acidic residues-rich tracts occupy residues 826–836 (EETKAHIRFSE) and 846–859 (QHFKNGELKLEEAS). 2 stretches are compositionally biased toward polar residues: residues 862–871 (PCGQQLSGGA) and 887–896 (RSQSTFQLSS). At Ser-890 the chain carries Phosphoserine. Positions 897-909 (EPEREPEWRDRPG) are enriched in basic and acidic residues. Residues Ser-910 and Ser-913 each carry the phosphoserine modification. The ASD1 domain maps to 928–1030 (IKDAQSRVLG…SEPEKMNEVG (103 aa)). Low complexity predominate over residues 950 to 964 (APVASRSWRPRPSSA). Ser-970 carries the post-translational modification Phosphoserine. Residues 1011–1027 (LTPEQKKRSYSEPEKMN) are compositionally biased toward basic and acidic residues. Ser-1069 and Ser-1072 each carry phosphoserine. Disordered regions lie at residues 1093–1115 (KTGKRPTSAAGCSLQEPGPLRER), 1137–1223 (SSLS…MSAE), 1315–1573 (ECPG…SFNK), and 1627–1665 (SLGGQPAPIQTQSLSHDPVSGTQGLEKKVSPDPQKSSED). Positions 1137 to 1148 (SSLSSLREPSLQ) are enriched in low complexity. A Phosphoserine modification is found at Ser-1221. A compositionally biased stretch (polar residues) spans 1366 to 1375 (YCSQDGQTGR). Positions 1403–1417 (CEGDGPEHGVEEGTR) are enriched in basic and acidic residues. Ser-1441 is modified (phosphoserine). Residues 1459 to 1472 (KQQSLPSLCSTSDP) are compositionally biased toward polar residues. Over residues 1498 to 1515 (PPPHEDYEDEVFVRDPHP) the composition is skewed to basic and acidic residues. Residues 1524 to 1536 (EPLPPPPPPPPSQ) show a composition bias toward pro residues. Over residues 1634–1649 (PIQTQSLSHDPVSGTQ) the composition is skewed to polar residues. Basic and acidic residues predominate over residues 1651–1665 (LEKKVSPDPQKSSED). Positions 1669–1957 (EALAKEIVHQ…QVKCLLESLP (289 aa)) constitute an ASD2 domain.

Belongs to the shroom family. As to quaternary structure, interacts with F-actin. Interacts with ROCK1.

The protein localises to the cell junction. It is found in the adherens junction. Its subcellular location is the cytoplasm. The protein resides in the cytoskeleton. It localises to the apical cell membrane. Its function is as follows. Controls cell shape changes in the neuroepithelium during neural tube closure. Induces apical constriction in epithelial cells by promoting the apical accumulation of F-actin and myosin II, and probably by bundling stress fibers. Induces apicobasal cell elongation by redistributing gamma-tubulin and directing the assembly of robust apicobasal microtubule arrays. This is Protein Shroom3 (SHROOM3) from Homo sapiens (Human).